Consider the following 290-residue polypeptide: Dual-specificity RNA pseudouridine synthase RluF (290 aa).

The 66-residue stretch at 7-72 folds into the S4 RNA-binding domain; sequence VRLNKYISES…EAEDLVLIAL (66 aa). Interaction with RNA regions lie at residues 105–108 and 187–190; these read RLDK and RQIR. Residue aspartate 107 is the Nucleophile of the active site. The tract at residues 243-290 is disordered; it reads VKPKAKAKPKTAGIKRPVVKMEKTAEKGGRPASNGKRFTSPGRKKKGR. Residues 261–271 show a composition bias toward basic and acidic residues; it reads VKMEKTAEKGG.

Belongs to the pseudouridine synthase RsuA family. In terms of assembly, monomer.

It catalyses the reaction uridine(2604) in 23S rRNA = pseudouridine(2604) in 23S rRNA. It carries out the reaction uridine(35) in tRNA(Tyr) = pseudouridine(35) in tRNA(Tyr). Its function is as follows. Dual specificity enzyme that catalyzes the synthesis of pseudouridine from uracil-2604 in 23S ribosomal RNA and from uracil-35 in the anticodon of tRNA(Tyr). Can, to a small extent, also react with uracil-2605. In Escherichia coli (strain K12), this protein is Dual-specificity RNA pseudouridine synthase RluF (rluF).